We begin with the raw amino-acid sequence, 345 residues long: Phosphate acyltransferase (345 aa).

This sequence belongs to the PlsX family. As to quaternary structure, homodimer. Probably interacts with PlsY.

Its subcellular location is the cytoplasm. The catalysed reaction is a fatty acyl-[ACP] + phosphate = an acyl phosphate + holo-[ACP]. It participates in lipid metabolism; phospholipid metabolism. In terms of biological role, catalyzes the reversible formation of acyl-phosphate (acyl-PO(4)) from acyl-[acyl-carrier-protein] (acyl-ACP). This enzyme utilizes acyl-ACP as fatty acyl donor, but not acyl-CoA. This is Phosphate acyltransferase from Chromobacterium violaceum (strain ATCC 12472 / DSM 30191 / JCM 1249 / CCUG 213 / NBRC 12614 / NCIMB 9131 / NCTC 9757 / MK).